The following is a 431-amino-acid chain: Serine hydroxymethyltransferase (431 aa).

(6S)-5,6,7,8-tetrahydrofolate is bound at residue Ala121–Val123. At Lys227 the chain carries N6-(pyridoxal phosphate)lysine.

The protein belongs to the SHMT family. Homodimer. Requires pyridoxal 5'-phosphate as cofactor.

It is found in the cytoplasm. It participates in amino-acid biosynthesis; glycine biosynthesis; glycine from L-serine: step 1/1. Functionally, catalyzes the reversible interconversion of serine and glycine with a modified folate serving as the one-carbon carrier. Also exhibits a pteridine-independent aldolase activity toward beta-hydroxyamino acids, producing glycine and aldehydes, via a retro-aldol mechanism. This Metallosphaera sedula (strain ATCC 51363 / DSM 5348 / JCM 9185 / NBRC 15509 / TH2) protein is Serine hydroxymethyltransferase.